We begin with the raw amino-acid sequence, 216 residues long: Somatotropin (216 aa).

The first 26 residues, 1–26, serve as a signal peptide directing secretion; the sequence is MAAGPRNSVLLAFALLCLPWPQEVGT. His-45 lines the Zn(2+) pocket. Cys-78 and Cys-189 are disulfide-bonded. Ser-131 is modified (phosphoserine). Residue Glu-198 coordinates Zn(2+). Residues Cys-206 and Cys-214 are joined by a disulfide bond.

The protein belongs to the somatotropin/prolactin family.

The protein localises to the secreted. In terms of biological role, plays an important role in growth control. Its major role in stimulating body growth is to stimulate the liver and other tissues to secrete IGF1. It stimulates both the differentiation and proliferation of myoblasts. It also stimulates amino acid uptake and protein synthesis in muscle and other tissues. The polypeptide is Somatotropin (GH1) (Felis catus (Cat)).